The following is a 245-amino-acid chain: Complement C1q subcomponent subunit C (245 aa).

The N-terminal stretch at 1-28 (MDVGPSSLPHLGLKLLLLLLLLPLRGQA) is a signal peptide. The region spanning 31-112 (GCYGIPGMPG…GIPGEPGEEG (82 aa)) is the Collagen-like domain. 6 positions are modified to 4-hydroxyproline: proline 36, proline 39, proline 42, proline 45, proline 54, and proline 63. The disordered stretch occupies residues 45-113 (PGKDGYDGLP…IPGEPGEEGR (69 aa)). A compositionally biased stretch (low complexity) spans 54-71 (PGPKGEPGIPAIPGIRGP). Lysine 75 carries the post-translational modification 5-hydroxylysine. A glycan (O-linked (Gal...) hydroxylysine) is linked at lysine 75. 4-hydroxyproline occurs at positions 81, 93, 96, 99, and 105. A compositionally biased stretch (pro residues) spans 90–99 (MGPPGMPGVP). Residues 115 to 245 (KQKFQSVFTV…VFSGFLLFPD (131 aa)) enclose the C1q domain. Cysteine 179 and cysteine 193 form a disulfide bridge.

In terms of assembly, core component of the complement C1 complex, a calcium-dependent complex composed of 1 molecule of the C1Q subcomplex, 2 molecules of C1R and 2 molecules of C1S. The C1Q subcomplex is composed 18 subunits: 3 chains of C1QA, C1QB, and C1QC trimerize to form 6 collagen-like triple helices connected to six globular ligand-recognition modules (C1q domain). In terms of processing, O-linked glycans consist of Glc-Gal disaccharides bound to the oxygen atom of post-translationally added hydroxyl groups.

The protein localises to the secreted. It is found in the cell surface. With respect to regulation, the C1Q subcomplex is inhibited by sulfated molecules, such as triterpenoid sulfates, heparan sulfate, or chondroitin sulfates. Its function is as follows. Core component of the complement C1 complex, a multiprotein complex that initiates the classical pathway of the complement system, a cascade of proteins that leads to phagocytosis and breakdown of pathogens and signaling that strengthens the adaptive immune system. The classical complement pathway is initiated by the C1Q subcomplex of the C1 complex, which specifically binds IgG or IgM immunoglobulins complexed with antigens, forming antigen-antibody complexes on the surface of pathogens: C1QA, together with C1QB and C1QC, specifically recognizes and binds the Fc regions of IgG or IgM via its C1q domain. Immunoglobulin-binding activates the proenzyme C1R, which cleaves C1S, initiating the proteolytic cascade of the complement system. The C1Q subcomplex is activated by a hexamer of IgG complexed with antigens, while it is activated by a pentameric IgM. The C1Q subcomplex also recognizes and binds phosphatidylserine exposed on the surface of cells undergoing programmed cell death, possibly promoting activation of the complement system. The chain is Complement C1q subcomponent subunit C from Homo sapiens (Human).